We begin with the raw amino-acid sequence, 451 residues long: G-protein coupled receptor 61 (451 aa).

Residues 1–14 (MESSPIPQSSGNSS) show a composition bias toward low complexity. Positions 1–31 (MESSPIPQSSGNSSTLGRVPQTPGPSTASGV) are disordered. The Extracellular segment spans residues 1–44 (MESSPIPQSSGNSSTLGRVPQTPGPSTASGVPEVGLRDVASESV). N-linked (GlcNAc...) asparagine glycosylation is present at asparagine 12. A helical transmembrane segment spans residues 45–67 (ALFFMLLLDLTAVAGNAAVMAVI). The Cytoplasmic portion of the chain corresponds to 68-75 (AKTPALRK). The helical transmembrane segment at 76–98 (FVFVFHLCLVDLLAALTLMPLAM) threads the bilayer. Residues 99-112 (LSSSALFDHALFGE) lie on the Extracellular side of the membrane. The chain crosses the membrane as a helical span at residues 113 to 135 (VACRLYLFLSVCFVSLAILSVSA). Residues 136 to 155 (INVERYYYVVHPMRYEVRMT) lie on the Cytoplasmic side of the membrane. Residues 156-178 (LGLVASVLVGVWVKALAMASVPV) form a helical membrane-spanning segment. The Extracellular segment spans residues 179–206 (LGRVSWEEGAPSVPPGCSLQWSHSAYCQ). The helical transmembrane segment at 207-229 (LFVVVFAVLYFLLPLLLILVVYC) threads the bilayer. Topologically, residues 230–287 (SMFRVARVAAMQHGPLPTWMETPRQRSESLSSRSTMVTSSGAPQTTPHRTFGGGKAAV) are cytoplasmic. A helical membrane pass occupies residues 288-310 (VLLAVGGQFLLCWLPYFSFHLYV). Over 311-324 (ALSAQPISTGQVES) the chain is Extracellular. The chain crosses the membrane as a helical span at residues 325 to 344 (VVTWIGYFCFTSNPFFYGCL). At 345–451 (NRQIRGELSK…RPAASPRLES (107 aa)) the chain is on the cytoplasmic side.

The protein belongs to the G-protein coupled receptor 1 family. Forms heterodimer with MTNR1B. Interacts with ARRB1 and ARRB2 in a spontaneous and agonist-independent manner; leading to the internalization of GPR61 in the endosomal compartment. In terms of tissue distribution, expressed in brain; detected in frontal and temporal lobes, occipital pole, amygdala and hippocampus. Also expressed in testis and T cells, B cells, and monocyte. Low expression in many other tissues. Widely expressed in the hippocampus (at protein level).

The protein resides in the cell membrane. It localises to the endosome membrane. Its function is as follows. Orphan G-protein coupled receptor. Constitutively activates the G(s)-alpha/cAMP signaling pathway. Shows a reciprocal regulatory interaction with the melatonin receptor MTNR1B most likely through receptor heteromerization. May be involved in the regulation of food intake and body weight. The protein is G-protein coupled receptor 61 (GPR61) of Homo sapiens (Human).